Here is a 617-residue protein sequence, read N- to C-terminus: Probable Xaa-Pro aminopeptidase P (617 aa).

Asp414, Asp425, Glu523, and Glu537 together coordinate Mn(2+).

It belongs to the peptidase M24B family. Requires Mn(2+) as cofactor.

It catalyses the reaction Release of any N-terminal amino acid, including proline, that is linked to proline, even from a dipeptide or tripeptide.. In terms of biological role, catalyzes the removal of a penultimate prolyl residue from the N-termini of peptides. The sequence is that of Probable Xaa-Pro aminopeptidase P (AMPP) from Ajellomyces capsulatus (strain NAm1 / WU24) (Darling's disease fungus).